The following is a 120-amino-acid chain: Large ribosomal subunit protein uL18 (120 aa).

It belongs to the universal ribosomal protein uL18 family. As to quaternary structure, part of the 50S ribosomal subunit; part of the 5S rRNA/L5/L18/L25 subcomplex. Contacts the 5S and 23S rRNAs.

In terms of biological role, this is one of the proteins that bind and probably mediate the attachment of the 5S RNA into the large ribosomal subunit, where it forms part of the central protuberance. The chain is Large ribosomal subunit protein uL18 from Staphylococcus epidermidis (strain ATCC 35984 / DSM 28319 / BCRC 17069 / CCUG 31568 / BM 3577 / RP62A).